The sequence spans 327 residues: GTPase Obg (327 aa).

Positions 1–159 (MQFIDQANII…WEVQLELKLL (159 aa)) constitute an Obg domain. The OBG-type G domain maps to 160 to 327 (AEVGIIGLPN…SLLSEVWKRI (168 aa)). ATP is bound by residues 166 to 173 (GLPNAGKS), 191 to 195 (FTTLI), 213 to 216 (DIPG), 280 to 283 (NKME), and 309 to 311 (SSS). Serine 173 and threonine 193 together coordinate Mg(2+).

It belongs to the TRAFAC class OBG-HflX-like GTPase superfamily. OBG GTPase family. In terms of assembly, monomer. The cofactor is Mg(2+).

It localises to the cytoplasm. An essential GTPase which binds GTP, GDP and possibly (p)ppGpp with moderate affinity, with high nucleotide exchange rates and a fairly low GTP hydrolysis rate. Plays a role in control of the cell cycle, stress response, ribosome biogenesis and in those bacteria that undergo differentiation, in morphogenesis control. This is GTPase Obg from Prochlorococcus marinus (strain MIT 9301).